The chain runs to 362 residues: 3-dehydroquinate synthase (362 aa).

NAD(+) contacts are provided by residues 71–76 (DGEQYK), 105–109 (GVVGD), 129–130 (TT), Lys-142, Lys-151, and 169–172 (CLKT). Zn(2+) is bound by residues Glu-184, His-247, and His-264.

Belongs to the sugar phosphate cyclases superfamily. Dehydroquinate synthase family. Requires Co(2+) as cofactor. Zn(2+) serves as cofactor. The cofactor is NAD(+).

It localises to the cytoplasm. It carries out the reaction 7-phospho-2-dehydro-3-deoxy-D-arabino-heptonate = 3-dehydroquinate + phosphate. The protein operates within metabolic intermediate biosynthesis; chorismate biosynthesis; chorismate from D-erythrose 4-phosphate and phosphoenolpyruvate: step 2/7. Its function is as follows. Catalyzes the conversion of 3-deoxy-D-arabino-heptulosonate 7-phosphate (DAHP) to dehydroquinate (DHQ). The polypeptide is 3-dehydroquinate synthase (Escherichia coli (strain 55989 / EAEC)).